The following is a 163-amino-acid chain: MQHYVTPDLCDAYPDLVQVLEPMFSNFGGRDSFGGQIVTIKCFEDNSLVKEQVDLDGKGKVLVVDGGGSLRRALLGDMLAEKAAKNGWEGLVIYGCVRDVDVLVQTDVGVQALASHPMKTDKRGIGDLNVAVTFAGVTFRPGEYVYADNNGVIVSPSPLKMPE.

Substrate contacts are provided by residues glycine 76 to leucine 79 and arginine 98. Aspartate 99 contacts a divalent metal cation.

This sequence belongs to the class II aldolase/RraA-like family. Homotrimer. Requires a divalent metal cation as cofactor.

The catalysed reaction is 4-hydroxy-4-methyl-2-oxoglutarate = 2 pyruvate. It catalyses the reaction oxaloacetate + H(+) = pyruvate + CO2. Catalyzes the aldol cleavage of 4-hydroxy-4-methyl-2-oxoglutarate (HMG) into 2 molecules of pyruvate. Also contains a secondary oxaloacetate (OAA) decarboxylase activity due to the common pyruvate enolate transition state formed following C-C bond cleavage in the retro-aldol and decarboxylation reactions. This Pseudomonas entomophila (strain L48) protein is Putative 4-hydroxy-4-methyl-2-oxoglutarate aldolase.